A 313-amino-acid polypeptide reads, in one-letter code: Cytochrome f (313 aa).

The N-terminal stretch at 1–30 is a signal peptide; that stretch reads MRNWSFSKAALTVSLLALSWSPFGPAEVQA. Positions 31, 51, 54, and 55 each coordinate heme. The helical transmembrane segment at 279 to 298 threads the bilayer; sequence VQGLIIFFAFVLIAQVFLVL.

Belongs to the cytochrome f family. As to quaternary structure, the 4 large subunits of the cytochrome b6-f complex are cytochrome b6, subunit IV (17 kDa polypeptide, petD), cytochrome f and the Rieske protein, while the 4 small subunits are PetG, PetL, PetM and PetN. The complex functions as a dimer. Heme serves as cofactor.

Its subcellular location is the plastid. The protein localises to the chloroplast thylakoid membrane. In terms of biological role, component of the cytochrome b6-f complex, which mediates electron transfer between photosystem II (PSII) and photosystem I (PSI), cyclic electron flow around PSI, and state transitions. This Nephroselmis olivacea (Green alga) protein is Cytochrome f.